We begin with the raw amino-acid sequence, 184 residues long: Ribosome-recycling factor (184 aa).

It belongs to the RRF family.

Its subcellular location is the cytoplasm. Its function is as follows. Responsible for the release of ribosomes from messenger RNA at the termination of protein biosynthesis. May increase the efficiency of translation by recycling ribosomes from one round of translation to another. In Onion yellows phytoplasma (strain OY-M), this protein is Ribosome-recycling factor.